A 456-amino-acid polypeptide reads, in one-letter code: tRNA modification GTPase MnmE (456 aa).

R24, E81, and K120 together coordinate (6S)-5-formyl-5,6,7,8-tetrahydrofolate. In terms of domain architecture, TrmE-type G spans 216-379 (GMTVVIAGRP…LRDHLKACMG (164 aa)). A K(+)-binding site is contributed by N226. Residues 226 to 231 (NAGKSS), 245 to 251 (TAIAGTT), 270 to 273 (DTAG), and 335 to 338 (NKAD) contribute to the GTP site. S230 serves as a coordination point for Mg(2+). 3 residues coordinate K(+): T245, I247, and T250. Mg(2+) is bound at residue T251. K456 lines the (6S)-5-formyl-5,6,7,8-tetrahydrofolate pocket.

This sequence belongs to the TRAFAC class TrmE-Era-EngA-EngB-Septin-like GTPase superfamily. TrmE GTPase family. Homodimer. Heterotetramer of two MnmE and two MnmG subunits. K(+) is required as a cofactor.

It localises to the cytoplasm. Its function is as follows. Exhibits a very high intrinsic GTPase hydrolysis rate. Involved in the addition of a carboxymethylaminomethyl (cmnm) group at the wobble position (U34) of certain tRNAs, forming tRNA-cmnm(5)s(2)U34. This chain is tRNA modification GTPase MnmE, found in Pseudomonas putida (strain W619).